A 421-amino-acid polypeptide reads, in one-letter code: Ribulose bisphosphate carboxylase large chain (421 aa).

Substrate is bound by residues Asn-68 and Thr-118. Catalysis depends on Lys-120, which acts as the Proton acceptor. Residue Lys-122 coordinates substrate. Residues Lys-146, Asp-148, and Glu-149 each contribute to the Mg(2+) site. Residue Lys-146 is modified to N6-carboxylysine. His-239 functions as the Proton acceptor in the catalytic mechanism. Substrate contacts are provided by Arg-240, His-272, and Ser-324.

It belongs to the RuBisCO large chain family. Type I subfamily. As to quaternary structure, heterohexadecamer of 8 large chains and 8 small chains; disulfide-linked. The disulfide link is formed within the large subunit homodimers. Mg(2+) is required as a cofactor. Post-translationally, the disulfide bond which can form in the large chain dimeric partners within the hexadecamer appears to be associated with oxidative stress and protein turnover.

The protein resides in the plastid. The protein localises to the chloroplast. The enzyme catalyses 2 (2R)-3-phosphoglycerate + 2 H(+) = D-ribulose 1,5-bisphosphate + CO2 + H2O. It carries out the reaction D-ribulose 1,5-bisphosphate + O2 = 2-phosphoglycolate + (2R)-3-phosphoglycerate + 2 H(+). RuBisCO catalyzes two reactions: the carboxylation of D-ribulose 1,5-bisphosphate, the primary event in carbon dioxide fixation, as well as the oxidative fragmentation of the pentose substrate in the photorespiration process. Both reactions occur simultaneously and in competition at the same active site. The sequence is that of Ribulose bisphosphate carboxylase large chain (rbcL) from Aegilops crassa (Persian goatgrass).